Here is a 53-residue protein sequence, read N- to C-terminus: Tsetse thrombin inhibitor (53 aa).

Residues 1–21 form the signal peptide; that stretch reads MKFFTVLFFLLSIIYLIVAAP.

As to expression, expressed at high levels in salivary glands and midguts of adult tsetse flies.

Its subcellular location is the secreted. Functionally, potent and specific inhibitor of human thrombin. It is also a potent inhibitor of thrombin-induced platelet aggregation. It is capable of antagonizing host hemostasis and facilitating blood feeding. This chain is Tsetse thrombin inhibitor (TTI), found in Glossina morsitans morsitans (Savannah tsetse fly).